The sequence spans 96 residues: Protein RSI-1 (96 aa).

A signal peptide spans 1-29 (MAKSGYNASFLLLISMFLILLTFSNVVEG).

It belongs to the GASA family. In terms of processing, six disulfide bonds may be present. As to expression, expressed very early in lateral root development.

The protein localises to the secreted. The protein is Protein RSI-1 (RSI-1) of Solanum lycopersicum (Tomato).